The chain runs to 135 residues: Large ribosomal subunit protein bL19 (135 aa).

Belongs to the bacterial ribosomal protein bL19 family.

This protein is located at the 30S-50S ribosomal subunit interface and may play a role in the structure and function of the aminoacyl-tRNA binding site. The sequence is that of Large ribosomal subunit protein bL19 from Xanthomonas euvesicatoria pv. vesicatoria (strain 85-10) (Xanthomonas campestris pv. vesicatoria).